A 62-amino-acid polypeptide reads, in one-letter code: Large ribosomal subunit protein bL32 (62 aa).

Belongs to the bacterial ribosomal protein bL32 family.

The protein is Large ribosomal subunit protein bL32 of Levilactobacillus brevis (strain ATCC 367 / BCRC 12310 / CIP 105137 / JCM 1170 / LMG 11437 / NCIMB 947 / NCTC 947) (Lactobacillus brevis).